A 97-amino-acid polypeptide reads, in one-letter code: Co-chaperonin GroES (97 aa).

Belongs to the GroES chaperonin family. As to quaternary structure, heptamer of 7 subunits arranged in a ring. Interacts with the chaperonin GroEL.

It is found in the cytoplasm. In terms of biological role, together with the chaperonin GroEL, plays an essential role in assisting protein folding. The GroEL-GroES system forms a nano-cage that allows encapsulation of the non-native substrate proteins and provides a physical environment optimized to promote and accelerate protein folding. GroES binds to the apical surface of the GroEL ring, thereby capping the opening of the GroEL channel. This is Co-chaperonin GroES from Yersinia pseudotuberculosis serotype O:1b (strain IP 31758).